A 276-amino-acid polypeptide reads, in one-letter code: Bis(5'-nucleosyl)-tetraphosphatase, symmetrical (276 aa).

The protein belongs to the Ap4A hydrolase family.

The catalysed reaction is P(1),P(4)-bis(5'-adenosyl) tetraphosphate + H2O = 2 ADP + 2 H(+). Its function is as follows. Hydrolyzes diadenosine 5',5'''-P1,P4-tetraphosphate to yield ADP. In Legionella pneumophila (strain Corby), this protein is Bis(5'-nucleosyl)-tetraphosphatase, symmetrical.